Reading from the N-terminus, the 103-residue chain is ATP-dependent Clp protease adapter protein ClpS (103 aa).

It belongs to the ClpS family. Binds to the N-terminal domain of the chaperone ClpA.

Its function is as follows. Involved in the modulation of the specificity of the ClpAP-mediated ATP-dependent protein degradation. The polypeptide is ATP-dependent Clp protease adapter protein ClpS (Nitrosomonas eutropha (strain DSM 101675 / C91 / Nm57)).